The primary structure comprises 879 residues: MDHLGYSGGISRVGIQHNRYSGQFSDRYSQYSESEYDPSETTHSESDSENHHHSNIPILEYPSFLSQSNDNVSNGPSNNTLSSSATSLGNNDGDEDLENVINNYLSFEKDVDILTERLGKTLSTLETEMIVGVLDSGVGVNEVISQLGDKDGTHLTGVTAWIEYYNKQLQDMKKYIEHIEGKNNKMEIVSRNQKLLYSELNNLIGLMTLSDNTISTLTAPQFNDTKGLKMAIEAAEDLKRALTTKLKSGMDNMMAVKDQRKVFETYKISFARKVAALVENIFKTTDKEIGKHVITTTSQTPGEEKFPDYLEYYDLLRKFKPLVNWLKEMDHEKLIPLIVSYIKAFRRIYESDIKLFFSTIQQSLEKESKDQNDFFSSSSSSKKSIDSLNNNTSTSTPSKNSSSSSSSSSGKDGIKKRKINRLFKYALSCLEIYIMTKQNFVMDFFLYQDPPRLAGQRNHHSNSSGGGSGSNKDGKDRKDKKSSKKDKKDKKDKKDKKDKKKKDPDSSSSPSLDNDKPIDSNSPKSPNNAVNGSLSSTEESSPPPPPPPPPKESPDAPLDLILSAMFNGVVPELINMVEKADQVNPFYLLTMLLETELYIDAHSRKDSHHSSYFVKILAEVQKSIKTLFNKFLEVQVDAIKSTQTSLKRCGVLPHFRNFHIFVKELQKYKSESDTGSSTLLIESSYKKIILELFNWLDGLVEKLPEDKKYKFISKLENHYFFYLKLQELNINCLTQHKDTSQSIFKENLEIYVNFLIDLKFKPLIEYYTKMDELLLTLPPSDIQFQQSHSKQQFKKIVEKFKTENIEKGLLKALGNVQKNITKDSQLILVIWERLEEVFIEKYEHFQDITSDCYNQTMPVSSDQIKGIFGTVYKKNPNKH.

The disordered stretch occupies residues 29–94 (SQYSESEYDP…ATSLGNNDGD (66 aa)). Residues 40–52 (ETTHSESDSENHH) show a composition bias toward basic and acidic residues. The span at 64–76 (FLSQSNDNVSNGP) shows a compositional bias: polar residues. The segment covering 77–91 (SNNTLSSSATSLGNN) has biased composition (low complexity). 2 coiled-coil regions span residues 165-187 (YNKQ…NKME) and 226-248 (KGLK…KLKS). Disordered stretches follow at residues 371 to 413 (QNDF…GKDG) and 455 to 557 (GQRN…PDAP). Over residues 373–409 (DFFSSSSSSKKSIDSLNNNTSTSTPSKNSSSSSSSSS) the composition is skewed to low complexity. Basic residues predominate over residues 480–500 (KKSSKKDKKDKKDKKDKKDKK). Residues 519–532 (DSNSPKSPNNAVNG) show a composition bias toward polar residues. The span at 541 to 551 (SPPPPPPPPPK) shows a compositional bias: pro residues.

It belongs to the SEC3 family. The exocyst complex is composed of sec3/exoc1, sec5/exoc2, sec6/exoc3, sec8/exoc4, sec10/exoc5, sec15/exoc6, exo70/exoc7 and exo84/exoc8.

Its subcellular location is the midbody. The protein localises to the midbody ring. Functionally, component of the exocyst complex involved in the docking of exocytic vesicles with fusion sites on the plasma membrane. The chain is Exocyst complex component 1 (exoc1) from Dictyostelium discoideum (Social amoeba).